A 308-amino-acid chain; its full sequence is HPr kinase/phosphorylase (308 aa).

Catalysis depends on residues H136 and K157. 151 to 158 contacts ATP; sequence GESGIGKS. S158 serves as a coordination point for Mg(2+). D175 (proton acceptor; for phosphorylation activity. Proton donor; for dephosphorylation activity) is an active-site residue. The important for the catalytic mechanism of both phosphorylation and dephosphorylation stretch occupies residues 198-207; the sequence is IEVRGMGIID. E199 is a binding site for Mg(2+). R240 is an active-site residue. The important for the catalytic mechanism of dephosphorylation stretch occupies residues 261–266; that stretch reads PIRPGR.

This sequence belongs to the HPrK/P family. Homohexamer. Mg(2+) serves as cofactor.

It carries out the reaction [HPr protein]-L-serine + ATP = [HPr protein]-O-phospho-L-serine + ADP + H(+). The enzyme catalyses [HPr protein]-O-phospho-L-serine + phosphate + H(+) = [HPr protein]-L-serine + diphosphate. In terms of biological role, catalyzes the ATP- as well as the pyrophosphate-dependent phosphorylation of a specific serine residue in HPr, a phosphocarrier protein of the phosphoenolpyruvate-dependent sugar phosphotransferase system (PTS). HprK/P also catalyzes the pyrophosphate-producing, inorganic phosphate-dependent dephosphorylation (phosphorolysis) of seryl-phosphorylated HPr (P-Ser-HPr). The two antagonistic activities of HprK/P are regulated by several intracellular metabolites, which change their concentration in response to the absence or presence of rapidly metabolisable carbon sources (glucose, fructose, etc.) in the growth medium. Therefore, by controlling the phosphorylation state of HPr, HPrK/P is a sensor enzyme that plays a major role in the regulation of carbon metabolism and sugar transport: it mediates carbon catabolite repression (CCR), and regulates PTS-catalyzed carbohydrate uptake and inducer exclusion. The polypeptide is HPr kinase/phosphorylase (Clostridium kluyveri (strain NBRC 12016)).